We begin with the raw amino-acid sequence, 1029 residues long: Toll-like receptor 9 (1029 aa).

The N-terminal stretch at 1 to 24 (MGPYCAPHPLSLLVQAAALAAALA) is a signal peptide. The Extracellular portion of the chain corresponds to 25–815 (QGTLPAFLPC…LCLDETLSLD (791 aa)). A disulfide bridge connects residues Cys-34 and Cys-44. Residue 46–50 (WLFLK) coordinates DNA. 26 LRR repeats span residues 61 to 84 (RANVTSLSLISNRIHHLHDSDFVH), 86 to 109 (SNLRVLNLKWNCPPAGLSPMHFPC), 121 to 146 (VPTLEELNLSYNGITTVPALPSSLVS), 149 to 165 (LSRTSILVLGPTHFTGL), 166 to 189 (HALRFLYMDGNCYYKNPCQQAVEV), 197 to 220 (LGNLTHLSLKYNNLTEVPRRLPPS), 222 to 241 (DTLLLSYNHIITLAPEDLAN), 242 to 267 (LTALRVLDVGGNCRRCDHARNPCREC), 282 to 305 (LSRLEGLVLKDSSLYKLEKDWFRG), 307 to 331 (GRLQVLDLSENFLYDYITKTTIFRN), 332 to 355 (LTQLRRLNLSFNYHKKVSFAHLQL), 362 to 385 (LVSLEKLDMHGIFFRSLTNTTLRP), 389 to 412 (LPKLQSLSLQLNFINQAELSIFGA), 414 to 439 (PSLLFVDLSDNRISGAARPVAALGEV), 469 to 492 (CNLNFTLDLSRNNLVTIQQEMFTR), 494 to 517 (SRLQCLRLSHNSISQAVNGSQFVP), 518 to 541 (LTRLRVLDLSYNKLDLYHGRSFTE), 543 to 570 (PQLEALDLSYNSQPFSMQGVGHNLSFVA), 572 to 596 (LPSLRYLSLAHNGIHSRVSQKLSSA), 598 to 620 (LRALDFSGNSLSQMWAEGDLYLC), 625 to 648 (LRNLVQLDLSKNHLHTLLPRHLDN), 650 to 673 (PKSLRQLRLRDNNLAFFNWSSLTV), 674 to 697 (LPQLEALDLAGNQLKALSNGSLPP), 699 to 721 (TRLQKLDVSSNSIGFVTPGFFVL), 722 to 745 (ANRLKELNLSANALKTVDPFWFGR), and 747 to 770 (TETLKILDVSANPLHCACGAAFVD). Asn-63 is a glycosylation site (N-linked (GlcNAc...) asparagine). DNA-binding positions include 71–76 (SNRIHH) and 94–108 (KWNCPPAGLSPMHFP). Cysteines 97 and 109 form a disulfide. Asn-128 carries an N-linked (GlcNAc...) asparagine glycan. Residues Tyr-131, Arg-151, and 178-180 (YYK) contribute to the DNA site. Cys-177 and Cys-183 are disulfide-bonded. N-linked (GlcNAc...) asparagine glycosylation occurs at Asn-199. DNA is bound at residue Tyr-207. N-linked (GlcNAc...) asparagine glycosylation is found at Asn-209 and Asn-241. 2 cysteine pairs are disulfide-bonded: Cys-254-Cys-267 and Cys-257-Cys-264. Residue Cys-257 is the site of S-palmitoyl cysteine attachment. Arg-261 serves as a coordination point for DNA. Cys-264 is lipidated: S-palmitoyl cysteine. 3 N-linked (GlcNAc...) asparagine glycosylation sites follow: Asn-331, Asn-339, and Asn-380. Cys-469 and Cys-498 form a disulfide bridge. Asn-472 and Asn-511 each carry an N-linked (GlcNAc...) asparagine glycan. Asn-565 is a glycosylation site (N-linked (GlcNAc...) asparagine). N-linked (GlcNAc...) asparagine glycosylation is found at Asn-667 and Asn-692. Asn-729 carries an N-linked (GlcNAc...) asparagine glycan. 2 disulfide bridges follow: Cys-762–Cys-788 and Cys-764–Cys-807. Residues 816–836 (CFGFSLLMVALGLAVPMLHHL) form a helical membrane-spanning segment. The Cytoplasmic segment spans residues 837-1029 (CGWDLWYCFH…NFCRGPTTAE (193 aa)). The region spanning 864-1009 (LLYDAFVVFD…SFWANLGMAL (146 aa)) is the TIR domain.

Belongs to the Toll-like receptor family. In terms of assembly, monomer and homodimer. Exists as a monomer in the absence of unmethylated cytidine-phosphate-guanosine (CpG) ligand. Proteolytic processing of an insertion loop (Z-loop) is required for homodimerization upon binding to the unmethylated CpG ligand leading to its activation. Interacts with MYD88 via their respective TIR domains. Interacts with BTK. Interacts (via transmembrane domain) with UNC93B1. Interacts with CD300LH; the interaction may promote full activation of TLR9-triggered innate responses. Interacts with CNPY3 and HSP90B1; this interaction is required for proper folding in the endoplasmic reticulum. Interacts with SMPDL3B. Interacts with CD82; this interaction is essential for TLR9-dependent myddosome formation in response to CpG stimulation. Post-translationally, activated by proteolytic cleavage of the flexible loop between repeats LRR14 and LRR15 within the ectodomain. Cleavage requires UNC93B1. Proteolytically processed by first removing the majority of the ectodomain by either asparagine endopeptidase (AEP) or a cathepsin followed by a trimming event that is solely cathepsin mediated and required for optimal receptor signaling. Palmitoylated by ZDHHC3 in the Golgi regulates TLR9 trafficking from the Golgi to endosomes. Depalmitoylation by PPT1 controls the release of TLR9 from UNC93B1 in endosomes.

Its subcellular location is the endoplasmic reticulum membrane. The protein localises to the endosome. It is found in the lysosome. The protein resides in the cytoplasmic vesicle. It localises to the phagosome. Key component of innate and adaptive immunity. TLRs (Toll-like receptors) control host immune response against pathogens through recognition of molecular patterns specific to microorganisms. TLR9 is a nucleotide-sensing TLR which is activated by unmethylated cytidine-phosphate-guanosine (CpG) dinucleotides. Acts via MYD88 and TRAF6, leading to NF-kappa-B activation, cytokine secretion and the inflammatory response. Upon CpG stimulation, induces B-cell proliferation, activation, survival and antibody production. The chain is Toll-like receptor 9 (TLR9) from Ovis aries (Sheep).